A 547-amino-acid chain; its full sequence is Solute carrier family 22 member 7 (547 aa).

A helical transmembrane segment spans residues 21 to 41 (VALLALPRVLLPMHFLLPIFL). Polar residues predominate over residues 91 to 103 (NSTLWGEGQNSGE). A disordered region spans residues 91-112 (NSTLWGEGQNSGEQPEGEPSTV). 11 helical membrane passes run 145-165 (AISTFFFAGVLVGAEVYGYLS), 179-199 (VSSLALGLASAASVSYIMFAI), 203-223 (LTGMALAGFTIIVMPLELEWL), 233-253 (VLSSTFWTGGVMLLALIGYLI), 258-278 (WLLLTVTLPCVPGILTLWWVP), 345-365 (ISLCCMVVWFGVNFSYYGVSL), 367-387 (LSGLGLNVYLTQLVFGAVELP), 403-423 (LTMAGTLLGAALAVGLRILVS), 431-451 (TALAVMGKAFSEAAFTTAYLF), 465-485 (MGLTALVGRLGGSLAPLAALL), and 492-512 (LPKLAYGGIALLAACTALLLP). The disordered stretch occupies residues 521-547 (ETIQDVERKSAPSSLQEEEMPMKQVQD).

Belongs to the major facilitator (TC 2.A.1) superfamily. Organic cation transporter (TC 2.A.1.19) family.

Its subcellular location is the basolateral cell membrane. The protein localises to the apical cell membrane. The protein resides in the cell membrane. It carries out the reaction orotate(out) + L-glutamate(in) = orotate(in) + L-glutamate(out). The enzyme catalyses 3',5'-cyclic GMP(in) = 3',5'-cyclic GMP(out). The catalysed reaction is GMP(in) = GMP(out). It catalyses the reaction 2'-deoxyguanosine(in) = 2'-deoxyguanosine(out). It carries out the reaction GDP(in) = GDP(out). The enzyme catalyses guanosine(in) = guanosine(out). The catalysed reaction is GTP(in) = GTP(out). It catalyses the reaction 3',5'-cyclic AMP(in) = 3',5'-cyclic AMP(out). It carries out the reaction creatinine(in) = creatinine(out). The enzyme catalyses prostaglandin E2(out) = prostaglandin E2(in). The catalysed reaction is 2-oxoglutarate(in) = 2-oxoglutarate(out). It catalyses the reaction glutarate(in) = glutarate(out). It carries out the reaction urate(out) = urate(in). The enzyme catalyses estrone 3-sulfate(out) = estrone 3-sulfate(in). In terms of biological role, functions as a Na(+)-independent bidirectional multispecific transporter. Contributes to the renal and hepatic elimination of endogenous organic compounds from the systemic circulation into the urine and bile, respectively. Capable of transporting a wide range of purine and pyrimidine nucleobases, nucleosides and nucleotides, with cGMP, 2'deoxyguanosine and GMP being the preferred substrates. Functions as a pH- and chloride-independent cGMP bidirectional facilitative transporter that can regulate both intracellular and extracellular levels of cGMP and may be involved in cGMP signaling pathways. Mediates orotate/glutamate bidirectional exchange and most likely display a physiological role in hepatic release of glutamate into the blood. Involved in renal secretion and possible reabsorption of creatinine. Able to uptake prostaglandin E2 (PGE2) and may contribute to PGE2 renal excretion. Also transports alpha-ketoglutarate and urate. Apart from the orotate/glutamate exchange, the counterions for the uptake of other SLC22A7/OAT2 substrates remain to be identified. This Bos taurus (Bovine) protein is Solute carrier family 22 member 7 (SLC22A7).